The chain runs to 618 residues: DNA ligase 2 (618 aa).

Residues 197 to 208 (DKKTLESREDAK) are compositionally biased toward basic and acidic residues. The segment at 197–250 (DKKTLESREDAKSVPPASQPEITNKISGDTSPNTSESVQTKKSDPDTSSNVDPS) is disordered. The segment covering 216–234 (PEITNKISGDTSPNTSESV) has biased composition (polar residues). Residue E312 participates in ATP binding. K314 serves as the catalytic N6-AMP-lysine intermediate. R319, R334, E363, F403, R476, and K482 together coordinate ATP. The segment at 459-480 (HEGVMLKDPDSTYNPGSRGQHW) is disordered.

Belongs to the ATP-dependent DNA ligase family. It depends on Mg(2+) as a cofactor.

It carries out the reaction ATP + (deoxyribonucleotide)n-3'-hydroxyl + 5'-phospho-(deoxyribonucleotide)m = (deoxyribonucleotide)n+m + AMP + diphosphate.. Functionally, DNA ligase that seals nicks in double-stranded DNA during DNA replication, DNA recombination and DNA repair. The protein is DNA ligase 2 of Haloquadratum walsbyi (strain DSM 16790 / HBSQ001).